Consider the following 194-residue polypeptide: HTH-type transcriptional regulator BetI (194 aa).

One can recognise an HTH tetR-type domain in the interval 8 to 68 (EIRRAQLIDA…ATMRHVLRDL (61 aa)). A DNA-binding region (H-T-H motif) is located at residues 31–50 (TLASVAQRANISTGIVSHYF).

It participates in amine and polyamine biosynthesis; betaine biosynthesis via choline pathway [regulation]. Its function is as follows. Repressor involved in the biosynthesis of the osmoprotectant glycine betaine. It represses transcription of the choline transporter BetT and the genes of BetAB involved in the synthesis of glycine betaine. This Burkholderia ambifaria (strain MC40-6) protein is HTH-type transcriptional regulator BetI.